Reading from the N-terminus, the 268-residue chain is DNA repair protein RecO (268 aa).

It belongs to the RecO family.

In terms of biological role, involved in DNA repair and RecF pathway recombination. The chain is DNA repair protein RecO from Mycobacterium leprae (strain Br4923).